Here is a 543-residue protein sequence, read N- to C-terminus: CTP synthase (543 aa).

The interval 1-265 (MTNYIFVTGG…DQLVVDRFGL (265 aa)) is amidoligase domain. Ser-13 is a binding site for CTP. Position 13 (Ser-13) interacts with UTP. ATP is bound by residues 14-19 (SLGKGI) and Asp-71. Mg(2+) is bound by residues Asp-71 and Glu-139. CTP-binding positions include 146–148 (DIE), 186–191 (KTKPTQ), and Lys-222. UTP contacts are provided by residues 186 to 191 (KTKPTQ) and Lys-222. 238–240 (KDV) is an ATP binding site. Positions 290-541 (NIGMIGKYVE…VAAAGKYQKE (252 aa)) constitute a Glutamine amidotransferase type-1 domain. Gly-351 is a binding site for L-glutamine. Cys-378 (nucleophile; for glutamine hydrolysis) is an active-site residue. L-glutamine is bound by residues 379–382 (LGMQ), Glu-402, and Arg-469. Residues His-514 and Glu-516 contribute to the active site.

Belongs to the CTP synthase family. Homotetramer.

The enzyme catalyses UTP + L-glutamine + ATP + H2O = CTP + L-glutamate + ADP + phosphate + 2 H(+). It carries out the reaction L-glutamine + H2O = L-glutamate + NH4(+). It catalyses the reaction UTP + NH4(+) + ATP = CTP + ADP + phosphate + 2 H(+). It participates in pyrimidine metabolism; CTP biosynthesis via de novo pathway; CTP from UDP: step 2/2. Its activity is regulated as follows. Allosterically activated by GTP, when glutamine is the substrate; GTP has no effect on the reaction when ammonia is the substrate. The allosteric effector GTP functions by stabilizing the protein conformation that binds the tetrahedral intermediate(s) formed during glutamine hydrolysis. Inhibited by the product CTP, via allosteric rather than competitive inhibition. Its function is as follows. Catalyzes the ATP-dependent amination of UTP to CTP with either L-glutamine or ammonia as the source of nitrogen. Regulates intracellular CTP levels through interactions with the four ribonucleotide triphosphates. This is CTP synthase from Alteromonas mediterranea (strain DSM 17117 / CIP 110805 / LMG 28347 / Deep ecotype).